The chain runs to 246 residues: 1-(5-phosphoribosyl)-5-[(5-phosphoribosylamino)methylideneamino] imidazole-4-carboxamide isomerase (246 aa).

Asp8 serves as the catalytic Proton acceptor. Asp129 functions as the Proton donor in the catalytic mechanism.

This sequence belongs to the HisA/HisF family.

Its subcellular location is the cytoplasm. The enzyme catalyses 1-(5-phospho-beta-D-ribosyl)-5-[(5-phospho-beta-D-ribosylamino)methylideneamino]imidazole-4-carboxamide = 5-[(5-phospho-1-deoxy-D-ribulos-1-ylimino)methylamino]-1-(5-phospho-beta-D-ribosyl)imidazole-4-carboxamide. It participates in amino-acid biosynthesis; L-histidine biosynthesis; L-histidine from 5-phospho-alpha-D-ribose 1-diphosphate: step 4/9. In Methylocella silvestris (strain DSM 15510 / CIP 108128 / LMG 27833 / NCIMB 13906 / BL2), this protein is 1-(5-phosphoribosyl)-5-[(5-phosphoribosylamino)methylideneamino] imidazole-4-carboxamide isomerase.